The sequence spans 133 residues: Holo-[acyl-carrier-protein] synthase (133 aa).

Asp8 and Glu57 together coordinate Mg(2+).

Belongs to the P-Pant transferase superfamily. AcpS family. It depends on Mg(2+) as a cofactor.

It is found in the cytoplasm. It carries out the reaction apo-[ACP] + CoA = holo-[ACP] + adenosine 3',5'-bisphosphate + H(+). Its function is as follows. Transfers the 4'-phosphopantetheine moiety from coenzyme A to a Ser of acyl-carrier-protein. The chain is Holo-[acyl-carrier-protein] synthase from Caulobacter vibrioides (strain ATCC 19089 / CIP 103742 / CB 15) (Caulobacter crescentus).